We begin with the raw amino-acid sequence, 398 residues long: Deoxyguanosinetriphosphate triphosphohydrolase-like protein (398 aa).

Residues 68 to 215 enclose the HD domain; the sequence is RLTHTLEVAQ…AAISDDIAYD (148 aa).

This sequence belongs to the dGTPase family. Type 2 subfamily.

The protein is Deoxyguanosinetriphosphate triphosphohydrolase-like protein of Azorhizobium caulinodans (strain ATCC 43989 / DSM 5975 / JCM 20966 / LMG 6465 / NBRC 14845 / NCIMB 13405 / ORS 571).